Here is a 275-residue protein sequence, read N- to C-terminus: Large ribosomal subunit protein uL2 (275 aa).

2 disordered regions span residues 36-55 and 223-275; these read KQSK…RHQG and VAMN…RHKR. Positions 39-48 are enriched in polar residues; sequence KNAGRNNSGR. The segment covering 229-239 has biased composition (basic and acidic residues); it reads DHPHGGGEGRT.

The protein belongs to the universal ribosomal protein uL2 family. As to quaternary structure, part of the 50S ribosomal subunit. Forms a bridge to the 30S subunit in the 70S ribosome.

Its function is as follows. One of the primary rRNA binding proteins. Required for association of the 30S and 50S subunits to form the 70S ribosome, for tRNA binding and peptide bond formation. It has been suggested to have peptidyltransferase activity; this is somewhat controversial. Makes several contacts with the 16S rRNA in the 70S ribosome. This chain is Large ribosomal subunit protein uL2, found in Aromatoleum aromaticum (strain DSM 19018 / LMG 30748 / EbN1) (Azoarcus sp. (strain EbN1)).